The primary structure comprises 906 residues: Catenin alpha-2 (906 aa).

Over residues 866 to 880 (KKPLVKREKPEEYQT) the composition is skewed to basic and acidic residues. The tract at residues 866–892 (KKPLVKREKPEEYQTRVRRGSQKKHIS) is disordered. Positions 881–891 (RVRRGSQKKHI) are enriched in basic residues.

Belongs to the vinculin/alpha-catenin family. Interacts with CDH1 and CDH2. In terms of tissue distribution, mainly in the nervous system (at protein level).

The protein resides in the cell membrane. It is found in the cytoplasm. The protein localises to the cytoskeleton. Its subcellular location is the cell junction. It localises to the adherens junction. The protein resides in the cell projection. It is found in the axon. The protein localises to the nucleus. Functionally, may function as a linker between cadherin adhesion receptors and the cytoskeleton to regulate cell-cell adhesion and differentiation in the nervous system. The protein is Catenin alpha-2 (CTNNA2) of Gallus gallus (Chicken).